The chain runs to 124 residues: Fluoride-specific ion channel FluC (124 aa).

4 helical membrane-spanning segments follow: residues 1-21 (MIAL…LRFA), 37-57 (GTLA…GLFL), 69-89 (GLIV…LDTV), and 99-119 (LALG…WAGL). Na(+) contacts are provided by G76 and T79.

The protein belongs to the fluoride channel Fluc/FEX (TC 1.A.43) family.

It localises to the cell inner membrane. The catalysed reaction is fluoride(in) = fluoride(out). Its activity is regulated as follows. Na(+) is not transported, but it plays an essential structural role and its presence is essential for fluoride channel function. Fluoride-specific ion channel. Important for reducing fluoride concentration in the cell, thus reducing its toxicity. The sequence is that of Fluoride-specific ion channel FluC from Pseudomonas putida (strain ATCC 700007 / DSM 6899 / JCM 31910 / BCRC 17059 / LMG 24140 / F1).